Reading from the N-terminus, the 142-residue chain is MSDSLVVCEVDPELKETLRKFRFRKETNNAAIIMKVDKDRQMVVLEDELQNISPEELKLELPERQPRFVVYSYKYVHDDGRVSYPLCFIFSSPVGCKPEQQMMYAGSKNRLVQTAELTKVFEIRTTDDLTETWLKEKLAFFR.

N-acetylserine is present on Ser2. Residues 4-139 (SLVVCEVDPE…TETWLKEKLA (136 aa)) enclose the ADF-H domain.

Belongs to the actin-binding proteins ADF family. GMF subfamily.

The sequence is that of Glia maturation factor gamma (Gmfg) from Mus musculus (Mouse).